A 469-amino-acid polypeptide reads, in one-letter code: ATP synthase subunit beta (469 aa).

155 to 162 serves as a coordination point for ATP; the sequence is GGAGCGKT.

The protein belongs to the ATPase alpha/beta chains family. F-type ATPases have 2 components, CF(1) - the catalytic core - and CF(0) - the membrane proton channel. CF(1) has five subunits: alpha(3), beta(3), gamma(1), delta(1), epsilon(1). CF(0) has three main subunits: a(1), b(2) and c(9-12). The alpha and beta chains form an alternating ring which encloses part of the gamma chain. CF(1) is attached to CF(0) by a central stalk formed by the gamma and epsilon chains, while a peripheral stalk is formed by the delta and b chains.

The protein resides in the cell inner membrane. The enzyme catalyses ATP + H2O + 4 H(+)(in) = ADP + phosphate + 5 H(+)(out). Produces ATP from ADP in the presence of a proton gradient across the membrane. The catalytic sites are hosted primarily by the beta subunits. In Syntrophus aciditrophicus (strain SB), this protein is ATP synthase subunit beta.